The primary structure comprises 431 residues: Enolase (431 aa).

Gln166 provides a ligand contact to (2R)-2-phosphoglycerate. Glu208 (proton donor) is an active-site residue. 3 residues coordinate Mg(2+): Asp245, Glu288, and Asp315. (2R)-2-phosphoglycerate-binding residues include Lys340, Arg369, Ser370, and Lys391. Residue Lys340 is the Proton acceptor of the active site.

This sequence belongs to the enolase family. The cofactor is Mg(2+).

It localises to the cytoplasm. It is found in the secreted. Its subcellular location is the cell surface. It catalyses the reaction (2R)-2-phosphoglycerate = phosphoenolpyruvate + H2O. Its pathway is carbohydrate degradation; glycolysis; pyruvate from D-glyceraldehyde 3-phosphate: step 4/5. Functionally, catalyzes the reversible conversion of 2-phosphoglycerate (2-PG) into phosphoenolpyruvate (PEP). It is essential for the degradation of carbohydrates via glycolysis. This chain is Enolase, found in Clostridium botulinum (strain Kyoto / Type A2).